A 565-amino-acid polypeptide reads, in one-letter code: Arginine--tRNA ligase (565 aa).

The 'HIGH' region motif lies at 128–138 (ANPTGPLHVGH).

This sequence belongs to the class-I aminoacyl-tRNA synthetase family. In terms of assembly, monomer.

Its subcellular location is the cytoplasm. It carries out the reaction tRNA(Arg) + L-arginine + ATP = L-arginyl-tRNA(Arg) + AMP + diphosphate. The chain is Arginine--tRNA ligase from Albidiferax ferrireducens (strain ATCC BAA-621 / DSM 15236 / T118) (Rhodoferax ferrireducens).